Consider the following 131-residue polypeptide: T3C protein (131 aa).

The chain is T3C protein from Ovis aries (Sheep).